The primary structure comprises 383 residues: Succinyl-diaminopimelate desuccinylase (383 aa).

His73 provides a ligand contact to Zn(2+). Asp75 is an active-site residue. Asp107 provides a ligand contact to Zn(2+). Residue Glu141 is the Proton acceptor of the active site. 3 residues coordinate Zn(2+): Glu142, Glu170, and His356.

It belongs to the peptidase M20A family. DapE subfamily. In terms of assembly, homodimer. Requires Zn(2+) as cofactor. Co(2+) is required as a cofactor.

It catalyses the reaction N-succinyl-(2S,6S)-2,6-diaminopimelate + H2O = (2S,6S)-2,6-diaminopimelate + succinate. It functions in the pathway amino-acid biosynthesis; L-lysine biosynthesis via DAP pathway; LL-2,6-diaminopimelate from (S)-tetrahydrodipicolinate (succinylase route): step 3/3. Its function is as follows. Catalyzes the hydrolysis of N-succinyl-L,L-diaminopimelic acid (SDAP), forming succinate and LL-2,6-diaminopimelate (DAP), an intermediate involved in the bacterial biosynthesis of lysine and meso-diaminopimelic acid, an essential component of bacterial cell walls. The protein is Succinyl-diaminopimelate desuccinylase of Pseudomonas putida (strain GB-1).